The chain runs to 520 residues: MAVWTRATKAGLVELLLRERWVRVVAELSGESLSLTGDAAAVEPEPPAAAFNGLPNGGGGESLPGSPNRGLGPPSPPAPPRGPAGEASASPPVRRVRVVKQEAGGLGISIKGGRENRMPILISKIFPGLAADQSRALRLGDAILSVNGTDLRQATHDQAVQALKRAGKEVLLEVKFIREVTPYIKKPSLVSDLPWEGASPQSPSFSGSEDSGSPKHQNTTKDRKVIPLKMCFAARNLSMPDLENRLIELHSPDSRNTLILRCKDTATAHSWFVAIHTNIMALLPQVLAELNAMLGATSTAGGSKEVKHIAWLAEQAKLDGGRQQWRPVLMAVTEKDLLLYDCMPWTRDAWASPCHSYPLVATRLVHSGSGCRSPSLGSDLTFATRTGSRQGIEMHLFRVETHRDLSTWTRILVQGCHAAAELIKEVSLGCTLSGQEVRFTVHYEHGFTITRDNGGASSILYRYPFERLKMSADDGIRNLYLDFGGPEGELTMDLHSCPKPIVFVLHTFLSAKVTRMGLLV.

Residues 45–95 (EPPAAAFNGLPNGGGGESLPGSPNRGLGPPSPPAPPRGPAGEASASPPVRR) form a disordered region. Residues 63 to 72 (LPGSPNRGLG) are compositionally biased toward low complexity. The segment covering 73 to 82 (PPSPPAPPRG) has biased composition (pro residues). Phosphoserine is present on residues S75, S90, S109, S191, S202, S213, S373, and S375. Over residues 83–93 (PAGEASASPPV) the composition is skewed to low complexity. The PDZ domain occupies 95 to 178 (RVRVVKQEAG…EVLLEVKFIR (84 aa)). PH domains follow at residues 143 to 280 (ILSV…TNIM) and 305 to 417 (EVKH…QGCH). A disordered region spans residues 195 to 220 (WEGASPQSPSFSGSEDSGSPKHQNTT). Low complexity predominate over residues 197–211 (GASPQSPSFSGSEDS). The 57-residue stretch at 464–520 (PFERLKMSADDGIRNLYLDFGGPEGELTMDLHSCPKPIVFVLHTFLSAKVTRMGLLV) folds into the SU domain. Residues 498–520 (PKPIVFVLHTFLSAKVTRMGLLV) form a calmodulin-binding region.

This sequence belongs to the syntrophin family. As to quaternary structure, monomer and homodimer. Interacts with the dystrophin protein DMD and related protein DTNA; and with the other members of the syntrophin family: SNTA1 and SNTB1. Interacts with the neuroregulin receptor ERBB4. Interacts with PTPRN when phosphorylated, protecting PTPRN from protein cleavage by CAPN1. Dephosphorylation upon insulin stimulation disrupts the interaction with PTPRN and results in the cleavage of PTPRN. Interacts with the sodium channel proteins SCN4A and SCN5A. Interacts with SAST, MAST205, microtubules and microtubule-associated proteins. Interacts with the dystrophin related protein UTRN. Interacts with DTNB. Post-translationally, phosphorylated. Partially dephosphorylated upon insulin stimulation. In terms of tissue distribution, ubiquitous. Expressed at high levels in the testis.

It localises to the membrane. It is found in the cytoplasmic vesicle. Its subcellular location is the secretory vesicle membrane. The protein localises to the cell junction. The protein resides in the cytoplasm. It localises to the cytoskeleton. Functionally, adapter protein that binds to and probably organizes the subcellular localization of a variety of membrane proteins. May link various receptors to the actin cytoskeleton and the dystrophin glycoprotein complex. May play a role in the regulation of secretory granules via its interaction with PTPRN. The protein is Beta-2-syntrophin (Sntb2) of Mus musculus (Mouse).